The following is a 130-amino-acid chain: Prefoldin subunit alpha (130 aa).

The protein belongs to the prefoldin subunit alpha family. In terms of assembly, heterohexamer of two alpha and four beta subunits.

Its subcellular location is the cytoplasm. Functionally, molecular chaperone capable of stabilizing a range of proteins. Seems to fulfill an ATP-independent, HSP70-like function in archaeal de novo protein folding. The protein is Prefoldin subunit alpha (pfdA) of Thermoplasma acidophilum (strain ATCC 25905 / DSM 1728 / JCM 9062 / NBRC 15155 / AMRC-C165).